The primary structure comprises 901 residues: Pantothenate kinase 2 (901 aa).

The segment covering 1-10 (MAGQEDEYDP) has biased composition (acidic residues). The interval 1–50 (MAGQEDEYDPILDNKREAEAKSQVSVAADKNMAPSTSGTPIHRSGSRPQL) is disordered. Positions 1-466 (MAGQEDEYDP…LGDLDEKISW (466 aa)) are pantothenate kinase. The tract at residues 467-901 (MEKFVRRGTE…CVCRYEPPSL (435 aa)) is 4'-phosphopantetheine phosphatase. Mn(2+) contacts are provided by Asp-731, Asn-732, and Asp-767. The short motif at 851–855 (EGMGR) is the Subfamily II EGMGR motif element.

This sequence in the N-terminal section; belongs to the type II pantothenate kinase family. In the C-terminal section; belongs to the damage-control phosphatase family. Phosphopantetheine phosphatase II subfamily. It depends on Mn(2+) as a cofactor. The cofactor is Ni(2+). Highly expressed in leaves and developing seeds. Expressed in roots, stems and flowers.

The catalysed reaction is (R)-pantothenate + ATP = (R)-4'-phosphopantothenate + ADP + H(+). It carries out the reaction (R)-4'-phosphopantothenate + H2O = (R)-pantothenate + phosphate. The enzyme catalyses (R)-4'-phosphopantetheine + H2O = (R)-pantetheine + phosphate. It catalyses the reaction (R)-4'-phosphopantetheine sulfonate + H2O = (R)-pantetheine sulfonate + phosphate. Its pathway is cofactor biosynthesis; coenzyme A biosynthesis; CoA from (R)-pantothenate: step 1/5. With respect to regulation, activity is strongly promoted by Co(2+), Ni(2+) and Mn(2+). Activity is inhibited by EDTA. Catalyzes the phosphorylation of pantothenate the first step in CoA biosynthesis. May play a role in the physiological regulation of the intracellular CoA concentration. Functionally redudant with PANK1. The phosphatase activity shows preference for normal or oxidatively damaged intermediates of 4'-phosphopantetheine, which provides strong indirect evidence that the phosphatase activity pre-empts damage in the CoA pathway. Hydrolyzing excess 4'-phosphopantetheine could constitute a directed overflow mechanism to prevent its oxidation to the S-sulfonate, sulfonate, or other forms. Hydrolyzing 4'-phosphopantetheine sulfonate or S-sulfonate would forestall their conversion to inactive forms of CoA and acyl carrier protein. The protein is Pantothenate kinase 2 (PANK2) of Arabidopsis thaliana (Mouse-ear cress).